The following is a 217-amino-acid chain: Uridylate kinase (217 aa).

5-9 provides a ligand contact to ATP; it reads KLTGR. G37 provides a ligand contact to UMP. ATP is bound by residues G38 and R42. Residues D59 and 107-113 contribute to the UMP site; that span reads FQPGQST. N134, Y139, and D142 together coordinate ATP.

This sequence belongs to the UMP kinase family. As to quaternary structure, homohexamer.

Its subcellular location is the cytoplasm. It catalyses the reaction UMP + ATP = UDP + ADP. Its pathway is pyrimidine metabolism; CTP biosynthesis via de novo pathway; UDP from UMP (UMPK route): step 1/1. Inhibited by UTP. Catalyzes the reversible phosphorylation of UMP to UDP. In Pyrobaculum calidifontis (strain DSM 21063 / JCM 11548 / VA1), this protein is Uridylate kinase.